Here is a 136-residue protein sequence, read N- to C-terminus: Phosphoribosyl-AMP cyclohydrolase (136 aa).

Position 92 (Asp-92) interacts with Mg(2+). Cys-93 is a Zn(2+) binding site. Mg(2+)-binding residues include Asp-94 and Asp-96. The Zn(2+) site is built by Cys-109 and Cys-116.

It belongs to the PRA-CH family. In terms of assembly, homodimer. Mg(2+) is required as a cofactor. It depends on Zn(2+) as a cofactor.

The protein localises to the cytoplasm. It carries out the reaction 1-(5-phospho-beta-D-ribosyl)-5'-AMP + H2O = 1-(5-phospho-beta-D-ribosyl)-5-[(5-phospho-beta-D-ribosylamino)methylideneamino]imidazole-4-carboxamide. It functions in the pathway amino-acid biosynthesis; L-histidine biosynthesis; L-histidine from 5-phospho-alpha-D-ribose 1-diphosphate: step 3/9. Its activity is regulated as follows. Reversibly inhibited by EDTA and free zinc ions. Enzyme is inactivated by dialysis against 1,10-phenanthroline, which is a zinc specific chelator. Its function is as follows. Catalyzes the hydrolysis of the adenine ring of phosphoribosyl-AMP. This chain is Phosphoribosyl-AMP cyclohydrolase, found in Methanococcus vannielii.